Here is a 1489-residue protein sequence, read N- to C-terminus: MSLEKLLNREENDSSKRTDFMGRWYLKMSKICERDDREMDYQNWKFLSYQEFELINEWNQQGKELTKDNCERLLVNMDKTHKEWVEYQKFKEQKDAIIAELKESIQIIKQEPSIPSGADANSVVSSDTEQIQDSETTANSKKSPAINGIKTSGKSPTKSPATNGRRRGAGGNRRVKRPSNLSKTVRSRNATDGDENGNENIENGGTTPKRRSRPKKILVSNVSKDVDAEEEDDIHTEKDASGSAADLDKDIVDESINDSENAPRKRPVSSTSLLSRNKSNKPTKSSPLTPDSAREKENVNGVTEGNEDMDHDSVLDADDSAIGSDDNPNDEQEEADDENVDEEAEDENDEAEVEDDIDDLGAPEDDGDDDFAPSYSAISKVKVNKKVNIDSPMPAIQKELRKMAIKSSVAKAMKRKFTNCKVISYSPESQLEIKITLKQLHIRKYKRHLAEEERKRKAEEALIKAEEEAKKRKLAPPPPPPPQQVRRVEHDLPTYGMKITLKEARAIQRHYDQTYITIWKDMARRDSGRISRQLQQIQSIRGQNFRKTSSLCAKEARRWQMRNFRQVKDFQTRARRGIREMSSFWKKNEREEREMKKKAEKEAIEQAKKEEEQRENLRAAKKLNFLLTQTELYSHFIGSKIKTNELEGTMTDDSLTSMSNNKNKVVDLTKTAASKTNVESIDFATEDDEKLRLMAAQNASNALKETQDKARKFDEEDEEDGELNFQNPTSLGEITIDQPKMLACTLKEYQLKGLNWLANLYDQGINGILADEMGLGKTVQSISVLAHLADRYNIWGPFIVVTPASTLHNWVNEISRFVPQFKILPYWGNANDRKTLRKFWDRKHLRYGRDAPFHVMVTSYQMVVSDASYLQKMKWQYMILDEAQAIKSSQSSRWKTLLSFHCRNRLLLTGTPIQNNMQELWALLHFIMPSLFDSHDEFSDWFSKDIESHAESNTELNQEQLRRLHMVLKPFMLRRIKKNVQSELGDKIEIDVLCDLTFRQAKLYQVLKSQVSGGYDAIENAAGNDDVTSDQKLVNLVMEFRKVCNHPDLFERADVMSPFSFVSFGESASLSREGDFVEVNYSAKNLINYNLPRLIYDELVVPNYNNDVDVRAKLLYHTMNIFHPANSFQLCFILSKLTDTSPNKFATLLEQNVINRAIDLQNDGYFNTAKYSIAYDEGEKIFSSNLLINDKLKYLHLLKNSTSGSVLKNLLEIPSSVYENEYFNSISPAYHPAASAPPINIDVLASNNFVQKKQYEMFNPSISSALSSIPSSVQHKLIVEKGIPIEELPVTEMAPKAFNNSFTSYIEMPSMDRFITESAKLKKLDELLVKLKEEDHRVLIYFQMTKMMDLMEEYLTYRQYTHIRLDGSSKLDDRRDLVHDWQTKPDIFIFLLSTRAGGLGINLTAADTVIFYDSDWNPTIDSQAMDRAHRLGQTRQVTVYRLLIRGTIEERMRDRAKQKEHVQQVVMEGKAKENKQKIIEVEKEHSESA.

Disordered stretches follow at residues 112–375 and 467–487; these read PSIP…APSY and EEAKKRKLAPPPPPPPQQVRR. Polar residues-rich tracts occupy residues 122–142 and 149–162; these read SVVSSDTEQIQDSETTANSKK and IKTSGKSPTKSPAT. Residues 164-177 are compositionally biased toward basic residues; that stretch reads GRRRGAGGNRRVKR. The span at 179–190 shows a compositional bias: polar residues; sequence SNLSKTVRSRNA. Residues 198–207 show a composition bias toward low complexity; the sequence is NENIENGGTT. The segment covering 235 to 252 has biased composition (basic and acidic residues); that stretch reads HTEKDASGSAADLDKDIV. The span at 268 to 289 shows a compositional bias: polar residues; the sequence is VSSTSLLSRNKSNKPTKSSPLT. Composition is skewed to acidic residues over residues 305 to 319 and 327 to 371; these read GNEDMDHDSVLDADD and NPND…DDDF. Residues 518–643 form the DBINO domain; the sequence is IWKDMARRDS…SHFIGSKIKT (126 aa). The Helicase ATP-binding domain maps to 758–930; it reads ANLYDQGING…WALLHFIMPS (173 aa). An ATP-binding site is contributed by 771 to 778; sequence DEMGLGKT. Residues 881 to 884 carry the DEAQ box motif; it reads DEAQ. The Helicase C-terminal domain occupies 1323–1479; sequence KLDELLVKLK…KAKENKQKII (157 aa).

It belongs to the SNF2/RAD54 helicase family. In terms of assembly, component of the INO80 chromatin-remodeling complex.

It is found in the nucleus. The enzyme catalyses ATP + H2O = ADP + phosphate + H(+). Functionally, ATPase component of the INO80 complex which remodels chromatin by shifting nucleosomes and is involved in DNA repair. This chain is Chromatin-remodeling ATPase INO80 (INO80), found in Kluyveromyces lactis (strain ATCC 8585 / CBS 2359 / DSM 70799 / NBRC 1267 / NRRL Y-1140 / WM37) (Yeast).